The following is a 122-amino-acid chain: Small ribosomal subunit protein uS13 (122 aa).

The segment at 93–122 (RRGLPVRGQRTKTNARTRKGPKKTIAGKKK) is disordered.

This sequence belongs to the universal ribosomal protein uS13 family. In terms of assembly, part of the 30S ribosomal subunit. Forms a loose heterodimer with protein S19. Forms two bridges to the 50S subunit in the 70S ribosome.

Its function is as follows. Located at the top of the head of the 30S subunit, it contacts several helices of the 16S rRNA. In the 70S ribosome it contacts the 23S rRNA (bridge B1a) and protein L5 of the 50S subunit (bridge B1b), connecting the 2 subunits; these bridges are implicated in subunit movement. Contacts the tRNAs in the A and P-sites. This chain is Small ribosomal subunit protein uS13, found in Corynebacterium efficiens (strain DSM 44549 / YS-314 / AJ 12310 / JCM 11189 / NBRC 100395).